The primary structure comprises 198 residues: Holliday junction branch migration complex subunit RuvA (198 aa).

The tract at residues 1-63 (MYDYIKGQLT…EDAHLLFGFH (63 aa)) is domain I. The segment at 64-142 (TEDEKDVFLK…EAPQETGHTK (79 aa)) is domain II. The interval 143–147 (ARSNK) is flexible linker. The domain III stretch occupies residues 148-198 (AGNTQLDEAIEALLALGYKATELKKIRAFFEGTSETAEQYIKSALKLLMKG).

It belongs to the RuvA family. Homotetramer. Forms an RuvA(8)-RuvB(12)-Holliday junction (HJ) complex. HJ DNA is sandwiched between 2 RuvA tetramers; dsDNA enters through RuvA and exits via RuvB. An RuvB hexamer assembles on each DNA strand where it exits the tetramer. Each RuvB hexamer is contacted by two RuvA subunits (via domain III) on 2 adjacent RuvB subunits; this complex drives branch migration. In the full resolvosome a probable DNA-RuvA(4)-RuvB(12)-RuvC(2) complex forms which resolves the HJ.

The protein localises to the cytoplasm. Its function is as follows. The RuvA-RuvB-RuvC complex processes Holliday junction (HJ) DNA during genetic recombination and DNA repair, while the RuvA-RuvB complex plays an important role in the rescue of blocked DNA replication forks via replication fork reversal (RFR). RuvA specifically binds to HJ cruciform DNA, conferring on it an open structure. The RuvB hexamer acts as an ATP-dependent pump, pulling dsDNA into and through the RuvAB complex. HJ branch migration allows RuvC to scan DNA until it finds its consensus sequence, where it cleaves and resolves the cruciform DNA. The polypeptide is Holliday junction branch migration complex subunit RuvA (Streptococcus pyogenes serotype M6 (strain ATCC BAA-946 / MGAS10394)).